A 381-amino-acid chain; its full sequence is Creatine kinase M-type (381 aa).

One can recognise a Phosphagen kinase N-terminal domain in the interval 11–98; the sequence is KLNFKAEEEY…FDPIIQDRHG (88 aa). A Phosphagen kinase C-terminal domain is found at 125–367; that stretch reads YVLSSRVRTG…KLMVEMEKKL (243 aa). 128 to 132 lines the ATP pocket; it reads SSRVR. S164 bears the Phosphoserine mark. Position 166 is a phosphothreonine (T166). S178 bears the Phosphoserine mark. T180 carries the phosphothreonine modification. H191 serves as a coordination point for ATP. Phosphoserine is present on S199. 2 residues coordinate ATP: R236 and R292. Phosphothreonine is present on residues T313 and T322. Residues 320–325 and D335 each bind ATP; that span reads RGTGGV. S372 carries the phosphoserine modification.

This sequence belongs to the ATP:guanido phosphotransferase family. Dimer of identical or non-identical chains, which can be either B (brain type) or M (muscle type). With MM being the major form in skeletal muscle and myocardium, MB existing in myocardium, and BB existing in many tissues, especially brain.

It catalyses the reaction creatine + ATP = N-phosphocreatine + ADP + H(+). In terms of biological role, reversibly catalyzes the transfer of phosphate between ATP and various phosphogens (e.g. creatine phosphate). Creatine kinase isoenzymes play a central role in energy transduction in tissues with large, fluctuating energy demands, such as skeletal muscle, heart, brain and spermatozoa. In Sus scrofa (Pig), this protein is Creatine kinase M-type (CKM).